Here is a 126-residue protein sequence, read N- to C-terminus: Fluoride-specific ion channel FluC (126 aa).

A run of 4 helical transmembrane segments spans residues 7–27 (LWLA…VLLL), 36–56 (FPAA…LTLA), 74–94 (GVLG…GLLL), and 98–118 (GGLA…AAVA). Na(+) contacts are provided by glycine 77 and threonine 80.

This sequence belongs to the fluoride channel Fluc/FEX (TC 1.A.43) family.

It localises to the cell membrane. The enzyme catalyses fluoride(in) = fluoride(out). Na(+) is not transported, but it plays an essential structural role and its presence is essential for fluoride channel function. In terms of biological role, fluoride-specific ion channel. Important for reducing fluoride concentration in the cell, thus reducing its toxicity. This is Fluoride-specific ion channel FluC from Deinococcus radiodurans (strain ATCC 13939 / DSM 20539 / JCM 16871 / CCUG 27074 / LMG 4051 / NBRC 15346 / NCIMB 9279 / VKM B-1422 / R1).